The following is an 843-amino-acid chain: MREEEMESSSEGETNKISRCKATGSDNPDEDYVEITLEVRDETINTMKAKATLRSVLSGRLKTMVKSLSFASRRLDRSKSFGAMFALRGLRFIAKNDAVGRGWDEVAMRFDKLAVEGKLPKSKFGHCIGMVESSEFVNELFEALVRRRGTTSSSITKTELFEFWEQITGNSFDDRLQIFFDMVDKNLDGRITGDEVKEIIALSASANKLSKIKENVDEYAALIMEELDRDNLGYIELHNLETLLLQVPSQSNNSPSSANKRALNKMLSQKLIPTKDRNPVKRFAMNISYFFLENWKRIWVLTLWISICITLFTWKFLQYKRKTVFEVMGYCVTVAKGSAETLKFNMALILLPVCRNTITWLRTKSKLIGSVVPFDDNINFHKVVAFGIAVGIGLHAISHLACDFPRLLHAKNVEFEPMKKFFGDERPENYGWFMKGTDGWTGVTMVVLMLVAYVLAQSWFRRNRANLPKSLKRLTGFNAFWYSHHLFVIVYVLLIVHGYFVYLSKEWYHKTTWMYLAVPVLLYAFERLIRAFRPGAKAVKVLKVAVYPGNVLSLYMSKPKGFKYTSGQYIYINCSDVSPLQWHPFSITSASGDDYLSVHIRTLGDWTSQLKSLYSKVCQLPSTSQSGLFIADIGQANNITRFPRLLIDGPYGAPAQDYRNYDVLLLVGLGIGATPLISIIRDVLNNIKNQNSIERGTNQHIKNYVATKRAYFYWVTREQGSLEWFSEVMNEVAEYDSEGMIELHNYCTSVYEEGDARSALITMLQSLHHAKSGIDIVSGTRVRTHFARPNWRSVFKHVAVNHVNQRVGVFYCGNTCIIGELKRLAQDFSRKTTTKFEFHKENF.

Over residues 1 to 10 the composition is skewed to acidic residues; sequence MREEEMESSS. The segment at 1–27 is disordered; the sequence is MREEEMESSSEGETNKISRCKATGSDN. At 1 to 297 the chain is on the cytoplasmic side; that stretch reads MREEEMESSS…SYFFLENWKR (297 aa). 2 EF-hand-like regions span residues 114–122 and 148–159; these read AVEGKLPKS and RGTTSSSITKTE. 2 EF-hand domains span residues 171 to 206 and 215 to 250; these read SFDD…SASA and NVDE…VPSQ. Residues Asp184, Asn186, Asp188, Arg190, and Glu195 each contribute to the Ca(2+) site. At Ser268 the chain carries Phosphoserine. The helical transmembrane segment at 298 to 318 threads the bilayer; that stretch reads IWVLTLWISICITLFTWKFLQ. Residues 319–383 lie on the Extracellular side of the membrane; it reads YKRKTVFEVM…FDDNINFHKV (65 aa). The Ferric oxidoreductase domain occupies 336-495; sequence KGSAETLKFN…LFVIVYVLLI (160 aa). A helical transmembrane segment spans residues 384–404; that stretch reads VAFGIAVGIGLHAISHLACDF. Over 405 to 439 the chain is Cytoplasmic; the sequence is PRLLHAKNVEFEPMKKFFGDERPENYGWFMKGTDG. A helical membrane pass occupies residues 440–460; the sequence is WTGVTMVVLMLVAYVLAQSWF. The Extracellular portion of the chain corresponds to 461–482; it reads RRNRANLPKSLKRLTGFNAFWY. A helical transmembrane segment spans residues 483–503; that stretch reads SHHLFVIVYVLLIVHGYFVYL. Over 504 to 511 the chain is Cytoplasmic; it reads SKEWYHKT. A helical transmembrane segment spans residues 512–529; the sequence is TWMYLAVPVLLYAFERLI. The Extracellular segment spans residues 530–659; sequence RAFRPGAKAV…PYGAPAQDYR (130 aa). Positions 534 to 657 constitute an FAD-binding FR-type domain; that stretch reads PGAKAVKVLK…DGPYGAPAQD (124 aa). The chain crosses the membrane as a helical span at residues 660–680; it reads NYDVLLLVGLGIGATPLISII. The Cytoplasmic segment spans residues 681-843; it reads RDVLNNIKNQ…TKFEFHKENF (163 aa).

Belongs to the RBOH (TC 5.B.1.3) family. In terms of assembly, monomer and homodimer.

It is found in the membrane. Calcium-dependent NADPH oxidase that generates superoxide. This chain is Respiratory burst oxidase homolog protein B (RBOHB), found in Arabidopsis thaliana (Mouse-ear cress).